Reading from the N-terminus, the 223-residue chain is Thiamine-phosphate synthase (223 aa).

4-amino-2-methyl-5-(diphosphooxymethyl)pyrimidine contacts are provided by residues 42 to 46 and asparagine 83; that span reads QLRDK. The Mg(2+) site is built by aspartate 84 and aspartate 103. A 4-amino-2-methyl-5-(diphosphooxymethyl)pyrimidine-binding site is contributed by serine 122. Residue 148–150 coordinates 2-[(2R,5Z)-2-carboxy-4-methylthiazol-5(2H)-ylidene]ethyl phosphate; sequence TPT. Lysine 151 is a 4-amino-2-methyl-5-(diphosphooxymethyl)pyrimidine binding site. Position 179 (glycine 179) interacts with 2-[(2R,5Z)-2-carboxy-4-methylthiazol-5(2H)-ylidene]ethyl phosphate.

The protein belongs to the thiamine-phosphate synthase family. Requires Mg(2+) as cofactor.

It carries out the reaction 2-[(2R,5Z)-2-carboxy-4-methylthiazol-5(2H)-ylidene]ethyl phosphate + 4-amino-2-methyl-5-(diphosphooxymethyl)pyrimidine + 2 H(+) = thiamine phosphate + CO2 + diphosphate. The catalysed reaction is 2-(2-carboxy-4-methylthiazol-5-yl)ethyl phosphate + 4-amino-2-methyl-5-(diphosphooxymethyl)pyrimidine + 2 H(+) = thiamine phosphate + CO2 + diphosphate. The enzyme catalyses 4-methyl-5-(2-phosphooxyethyl)-thiazole + 4-amino-2-methyl-5-(diphosphooxymethyl)pyrimidine + H(+) = thiamine phosphate + diphosphate. It functions in the pathway cofactor biosynthesis; thiamine diphosphate biosynthesis; thiamine phosphate from 4-amino-2-methyl-5-diphosphomethylpyrimidine and 4-methyl-5-(2-phosphoethyl)-thiazole: step 1/1. In terms of biological role, condenses 4-methyl-5-(beta-hydroxyethyl)thiazole monophosphate (THZ-P) and 2-methyl-4-amino-5-hydroxymethyl pyrimidine pyrophosphate (HMP-PP) to form thiamine monophosphate (TMP). In Mycobacterium avium (strain 104), this protein is Thiamine-phosphate synthase.